A 346-amino-acid polypeptide reads, in one-letter code: Heterogeneous nuclear ribonucleoprotein A2 homolog 1 (346 aa).

RRM domains follow at residues 9–92 and 100–179; these read RKLF…ESAK and KKLF…LSKQ. Disordered regions lie at residues 182–217 and 326–346; these read QDVQNTRNNRGGNFGFGDSRGGGNFGSGPGGNFRGG and NYGPGNASGGNGGGYGGRNRY. Residues 193–217 show a composition bias toward gly residues; that stretch reads GNFGFGDSRGGGNFGSGPGGNFRGG. The segment at 297–340 is nuclear targeting sequence; the sequence is QQSSNYGPMKSGGNFGGNRSMGGGPYGGGNYGPGNASGGNGGGY.

It is found in the nucleus. Forms complexes (ribonucleosomes) with at least 20 other different hnRNP and heterogeneous nuclear RNA in the nucleus. The polypeptide is Heterogeneous nuclear ribonucleoprotein A2 homolog 1 (Xenopus laevis (African clawed frog)).